The primary structure comprises 147 residues: HTH-type transcriptional regulator MgrA (147 aa).

Residues 8–139 form the HTH marR-type domain; sequence KEQLCFSLYN…LNRLLGKVIH (132 aa). The H-T-H motif DNA-binding region spans 55–78; it reads VKKVVTELALDTGTVSPLLKRMEQ.

Its subcellular location is the cytoplasm. Regulatory protein involved in autolytic activity, multidrug resistance and virulence. Controls autolysis by inactivating LytM, LytN (autolysins) and SarV (autolysis activator) and activating ArlRS, LrgAB and LytSR (autolysis inhibitors). Acts as a dual regulator for resistance to multiple drugs by inactivating NorB and tet38 and activating NorA. Positively controls the expression of virulence accessory gene regulator (agr) to promote alpha-hemolysin (hla) transcription and down-regulates staphylococcal accessory regulator (sarS), leading to repression of surface protein A (spa). Binds directly to hla promoter to augment its activation. Binds to sarS promoter to down-regulate spa expression. The sequence is that of HTH-type transcriptional regulator MgrA (mgrA) from Staphylococcus aureus (strain NCTC 8325 / PS 47).